A 144-amino-acid polypeptide reads, in one-letter code: UPF0102 protein BURPS668_3819 (144 aa).

Residues 1–28 (MCHAREASLGTGEPEAAPRDNFPREAGS) are disordered. The segment covering 16 to 28 (AAPRDNFPREAGS) has biased composition (basic and acidic residues).

It belongs to the UPF0102 family.

In Burkholderia pseudomallei (strain 668), this protein is UPF0102 protein BURPS668_3819.